The following is a 187-amino-acid chain: Frataxin, mitochondrial (187 aa).

It belongs to the frataxin family. In terms of assembly, monomer. Oligomer. Interacts with NIFS1.

Its subcellular location is the mitochondrion. The enzyme catalyses 4 Fe(2+) + O2 + 4 H(+) = 4 Fe(3+) + 2 H2O. Functionally, promotes the biosynthesis of heme as well as the assembly and repair of iron-sulfur clusters by delivering Fe(2+) to proteins involved in these pathways. May play a role in the protection against iron-catalyzed oxidative stress through its ability to catalyze the oxidation of Fe(2+) to Fe(3+). May be able to store large amounts of the metal in the form of a ferrihydrite mineral by oligomerization. Binds to the mitochondrial cysteine desulfurase NIFS1 and increases its activity. The polypeptide is Frataxin, mitochondrial (FH) (Arabidopsis thaliana (Mouse-ear cress)).